Reading from the N-terminus, the 1818-residue chain is U3 small nucleolar RNA-associated protein 10 (1818 aa).

The helical transmembrane segment at 568–588 (TDFYLLIPLILLALFDNSKLI) threads the bilayer. An HEAT repeat occupies 1778–1816 (LVPYIAELLEDDDEEVEMEVRRGLVRVIENVLGEPLDRY).

The protein belongs to the HEATR1/UTP10 family. In terms of assembly, component of the ribosomal small subunit (SSU) processome.

Its subcellular location is the nucleus. It localises to the nucleolus. The protein localises to the membrane. Functionally, involved in nucleolar processing of pre-18S ribosomal RNA. Involved in ribosome biosynthesis. The chain is U3 small nucleolar RNA-associated protein 10 from Candida albicans (strain SC5314 / ATCC MYA-2876) (Yeast).